Here is a 366-residue protein sequence, read N- to C-terminus: Growth hormone secretagogue receptor type 1 (366 aa).

Over 1-40 (MWNATLSEEPGYNLTLPDLGWDAPADNDSLTDELLPLFPA) the chain is Extracellular. Residues asparagine 3, asparagine 13, and asparagine 27 are each glycosylated (N-linked (GlcNAc...) asparagine). The helical transmembrane segment at 41-66 (PLLAGVTATCVALFVVGIAGNLLTML) threads the bilayer. Residues 67–72 (VVSRFR) lie on the Cytoplasmic side of the membrane. A helical transmembrane segment spans residues 73 to 96 (ELRTTTNLYLSSMAFSDLLIFLCM). The Extracellular segment spans residues 97 to 117 (PLDLVRLWQYRPWNFGDLLCK). Cysteines 116 and 198 form a disulfide. The helical transmembrane segment at 118–139 (LFQFVSESCTYATVLTITALSV) threads the bilayer. The Cytoplasmic segment spans residues 140–162 (ERYFAICFPLRAKVVVTKGRVKL). The chain crosses the membrane as a helical span at residues 163–183 (VILVIWAVAFCSAGPIFVLVG). At 184-211 (VEHENGTDPRDTNECRATEFAVRSGLLT) the chain is on the extracellular side. Asparagine 188 carries an N-linked (GlcNAc...) asparagine glycan. The helical transmembrane segment at 212–235 (VMVWVSSVFFFLPVFCLTVLYSLI) threads the bilayer. The Cytoplasmic segment spans residues 236–263 (GRKLWRRKRGEAAVGASLRDQNHKQTVK). The chain crosses the membrane as a helical span at residues 264–285 (MLAVVVFAFILCWLPFHVGRYL). The Extracellular segment spans residues 286-302 (FSKSFEPGSLEIAQISQ). The chain crosses the membrane as a helical span at residues 303–326 (YCNLVSFVLFYLSAAINPILYNIM). Over 327–366 (SKKYRVAVFKLLGFEPFSQRKLSTLKDESSRAWTETSINT) the chain is Cytoplasmic.

Belongs to the G-protein coupled receptor 1 family.

Its subcellular location is the cell membrane. Receptor for ghrelin, coupled to G-alpha-11 proteins. Stimulates growth hormone secretion. Also binds other growth hormone releasing peptides (GHRP) (e.g. Met-enkephalin and GHRP-6) as well as non-peptide, low molecular weight secretagogues (e.g. L-692,429, MK-0677, adenosine). In Mustela putorius furo (European domestic ferret), this protein is Growth hormone secretagogue receptor type 1 (GHSR).